The primary structure comprises 559 residues: Potassium-transporting ATPase potassium-binding subunit (559 aa).

12 consecutive transmembrane segments (helical) span residues 7–27 (LLIASFLLILLVLAKPLGSGL), 63–83 (LLALLTLNLLGLSILFCLLFW), 132–152 (GLTVQNFLSAATGIAVVFALI), 170–190 (LVRITLWILFPVALIIALFFI), 253–273 (MVQMLAIFLIPAALCFAFGEA), 283–303 (LLWAMSFIFVVCVAVVMWAEV), 327–347 (FGVLASSLFAVVTTAASCGAV), 356–376 (ALGGMVPMWLMQIGEVVFGGV), 379–399 (GLYGMLLFVLLAVFIAGLMIG), 416–436 (MTALAILVTPMLVLLGSALAM), 484–504 (LLAFCMFVGRFGVIIPVMAIA), and 524–544 (GALFIGLLIGTVLLVGALTFI).

This sequence belongs to the KdpA family. As to quaternary structure, the system is composed of three essential subunits: KdpA, KdpB and KdpC.

It localises to the cell inner membrane. Its function is as follows. Part of the high-affinity ATP-driven potassium transport (or Kdp) system, which catalyzes the hydrolysis of ATP coupled with the electrogenic transport of potassium into the cytoplasm. This subunit binds the periplasmic potassium ions and delivers the ions to the membrane domain of KdpB through an intramembrane tunnel. This Salmonella arizonae (strain ATCC BAA-731 / CDC346-86 / RSK2980) protein is Potassium-transporting ATPase potassium-binding subunit.